A 202-amino-acid chain; its full sequence is Glycerol-3-phosphate acyltransferase (202 aa).

The next 6 helical transmembrane spans lie at methionine 2 to isoleucine 22, phenylalanine 54 to leucine 74, phenylalanine 85 to tyrosine 105, valine 120 to leucine 140, lysine 141 to serine 161, and leucine 162 to isoleucine 182.

It belongs to the PlsY family. As to quaternary structure, probably interacts with PlsX.

The protein localises to the cell membrane. The catalysed reaction is an acyl phosphate + sn-glycerol 3-phosphate = a 1-acyl-sn-glycero-3-phosphate + phosphate. Its pathway is lipid metabolism; phospholipid metabolism. Functionally, catalyzes the transfer of an acyl group from acyl-phosphate (acyl-PO(4)) to glycerol-3-phosphate (G3P) to form lysophosphatidic acid (LPA). This enzyme utilizes acyl-phosphate as fatty acyl donor, but not acyl-CoA or acyl-ACP. The protein is Glycerol-3-phosphate acyltransferase of Staphylococcus aureus (strain USA300).